The following is a 230-amino-acid chain: Orotidine 5'-phosphate decarboxylase (230 aa).

Substrate-binding positions include Asp11, Lys34, 61–70, Thr117, Arg179, Gln188, Gly208, and Arg209; that span reads DLKLHDIPNT. The Proton donor role is filled by Lys63.

The protein belongs to the OMP decarboxylase family. Type 1 subfamily. In terms of assembly, homodimer.

It carries out the reaction orotidine 5'-phosphate + H(+) = UMP + CO2. It functions in the pathway pyrimidine metabolism; UMP biosynthesis via de novo pathway; UMP from orotate: step 2/2. Catalyzes the decarboxylation of orotidine 5'-monophosphate (OMP) to uridine 5'-monophosphate (UMP). The chain is Orotidine 5'-phosphate decarboxylase from Streptococcus pyogenes serotype M1.